The chain runs to 653 residues: MSARLRVADVRAELQRRGLDVSGTKPALVRRLDAAICEAEKAVVAAAPTSVANGYDVAVDGKRNCGNNKRKRSGDGGEEGNGDTCTDVTKLEGMSYRELQGLAKARGVAANGGKKDVIQRLLSATAGPAAVADGGPLGAKEVIKGGDEEVEVKKEKMVTATKKGAAVLDQHIPDHIKVNYHVLQVGDEIYDATLNQTNVGDNNNKFYIIQVLESDAGGSFMVYNRWGRVGVRGQDKLHGPSPTRDQAIYEFEGKFHNKTNNHWSDRKNFKCYAKKYTWLEMDYGETEKEIEKGSITDQIKETKLETRIAQFISLICNISMMKQRMVEIGYNAEKLPLGKLRKATILKGYHVLKRISDVISKADRRHLEQLTGEFYTVIPHDFGFRKMREFIIDTPQKLKAKLEMVEALGEIEIATKLLEDDSSDQDDPLYARYKQLHCDFTPLEADSDEYSMIKSYLRNTHGKTHSGYTVDIVQIFKVSRHGETERFQKFASTRNRMLLWHGSRLSNWAGILSQGLRIAPPEAPVTGYMFGKGVYFADMFSKSANYCYASEACRSGVLLLCEVALGDMNELLNADYDANNLPKGKLRSKGVGQTAPNMVESKVADDGVVVPLGEPKQEPSKRGGLLYNEYIVYNVDQIRMRYVLHVNFNFKRR.

In terms of domain architecture, SAP 1 spans 2-36; that stretch reads SARLRVADVRAELQRRGLDVSGTKPALVRRLDAAI. The segment at 64–84 is disordered; that stretch reads NCGNNKRKRSGDGGEEGNGDT. Residues 69-72 carry the Nuclear localization signal motif; it reads KRKR. The 35-residue stretch at 91-125 folds into the SAP 2 domain; the sequence is LEGMSYRELQGLAKARGVAANGGKKDVIQRLLSAT. The WGR domain maps to 179–276; sequence NYHVLQVGDE…KNFKCYAKKY (98 aa). The 119-residue stretch at 301–419 folds into the PARP alpha-helical domain; that stretch reads ETKLETRIAQ…EIEIATKLLE (119 aa). A PARP catalytic domain is found at 427-653; the sequence is DPLYARYKQL…LHVNFNFKRR (227 aa).

The protein belongs to the ARTD/PARP family.

It is found in the nucleus. It carries out the reaction NAD(+) + (ADP-D-ribosyl)n-acceptor = nicotinamide + (ADP-D-ribosyl)n+1-acceptor + H(+).. The enzyme catalyses L-aspartyl-[protein] + NAD(+) = 4-O-(ADP-D-ribosyl)-L-aspartyl-[protein] + nicotinamide. It catalyses the reaction L-glutamyl-[protein] + NAD(+) = 5-O-(ADP-D-ribosyl)-L-glutamyl-[protein] + nicotinamide. Its function is as follows. Involved in the base excision repair (BER) pathway, by catalyzing the poly(ADP-ribosyl)ation of a limited number of acceptor proteins involved in chromatin architecture and in DNA metabolism. This modification follows DNA damages and appears as an obligatory step in a detection/signaling pathway leading to the reparation of DNA strand breaks. The polypeptide is Poly [ADP-ribose] polymerase 2 (PARP2) (Zea mays (Maize)).